Reading from the N-terminus, the 510-residue chain is NAD(P)H-quinone oxidoreductase subunit 2, chloroplastic (510 aa).

12 consecutive transmembrane segments (helical) span residues Leu-24–Leu-44, Trp-59–Trp-79, Ile-99–Ile-119, Met-124–Cys-144, Leu-149–Tyr-169, Tyr-183–Gly-203, Ile-229–Phe-249, Trp-295–Ile-315, Met-323–Asp-343, Gly-347–Ala-367, Ala-395–Phe-415, and Leu-418–Leu-438.

It belongs to the complex I subunit 2 family. NDH is composed of at least 16 different subunits, 5 of which are encoded in the nucleus.

Its subcellular location is the plastid. The protein localises to the chloroplast thylakoid membrane. It carries out the reaction a plastoquinone + NADH + (n+1) H(+)(in) = a plastoquinol + NAD(+) + n H(+)(out). The enzyme catalyses a plastoquinone + NADPH + (n+1) H(+)(in) = a plastoquinol + NADP(+) + n H(+)(out). Functionally, NDH shuttles electrons from NAD(P)H:plastoquinone, via FMN and iron-sulfur (Fe-S) centers, to quinones in the photosynthetic chain and possibly in a chloroplast respiratory chain. The immediate electron acceptor for the enzyme in this species is believed to be plastoquinone. Couples the redox reaction to proton translocation, and thus conserves the redox energy in a proton gradient. This Allium textile (Textile onion) protein is NAD(P)H-quinone oxidoreductase subunit 2, chloroplastic.